Consider the following 540-residue polypeptide: MELFIKLPFIQPIPFSIILVTTVSIVLLYSVFFWVTDKKKKRKKAPNAAGAWPLIGHLRLLMNDKEPLYRALGSMADKYGPAFNIRLGNQEVLVVSNWEMVKQCFGNQNDKLFSNRQTTLAAKYMLNQTTSSGFAPYGPYWRELRKIMVQQLLSKQSLESWKHLKIKEMDASFSKLNELCNNNGTGTATLIRMDEWFAELTFNVIARNVFGYQSGGRSTALTNGDTESKGERYKKTLEEALHLMSIFAVSDIFPSLEWVDRLRGLIRNMKRFGDELNSIAGCLIEEHRQKRLQSVSKSDKGVGDEQDFVDVLLSVAEKSQLPGDDPDLVIKSMILEIVSGGSETTSSTLTWALCLLLNHPHVLKKAKEELDTHVGKDRHVEESDTPKLVYINAIIKESMRLYPNGAMLDRLALEECEVGGFHVPAGGRLFVNVWKIQRDPSVWENPLEFKPERWFLSNGEKMDVDYKGHNHEFIPFGIGRRMCAGMLWASEVIHLVLPRLIHGFDMKAASANGKVDMAEMAGMVICFKKTPLEVMVNPRE.

Residues 15–35 (FSIILVTTVSIVLLYSVFFWV) traverse the membrane as a helical segment. Cysteine 483 serves as a coordination point for heme.

The protein belongs to the cytochrome P450 family. It depends on heme as a cofactor. Highly expressed in capsules. Expressed is stems.

It localises to the membrane. The enzyme catalyses (13S,14R)-13-O-acetyl-1-hydroxy-N-methylcanadine + reduced [NADPH--hemoprotein reductase] + O2 = (13S,14R)-13-O-acetyl-1,8-dihydroxy-N-methylcanadine + oxidized [NADPH--hemoprotein reductase] + H2O + H(+). Its pathway is alkaloid biosynthesis. In terms of biological role, cytochrome P450 involved in the biosynthesis of the benzylisoquinoline alkaloid noscapine. Converts (13S,14R)-13-O-acetyl-1-hydroxy-N-methylcanadine to (13S,14R)-13-O-acetyl-1,8-dihydroxy-N-methylcanadine. In Papaver somniferum (Opium poppy), this protein is (13S,14R)-13-O-acetyl-1-hydroxy-N-methylcanadine 8-hydroxylase CYP82X1.